We begin with the raw amino-acid sequence, 172 residues long: uncharacterized protein (172 aa).

Residues 109-129 (MLLLYLYYNLLLLTASTPLTF) form a helical membrane-spanning segment.

The protein localises to the membrane. This is an uncharacterized protein from Saccharomyces cerevisiae (strain ATCC 204508 / S288c) (Baker's yeast).